Here is a 536-residue protein sequence, read N- to C-terminus: Solute carrier family 2, facilitated glucose transporter member 10 (536 aa).

The Cytoplasmic portion of the chain corresponds to 1–15; that stretch reads MGLRPAVLLLCASVS. Residues 16-36 traverse the membrane as a helical segment; it reads LLGGLTFGYELAVISGALLPL. Over 37 to 48 the chain is Extracellular; the sequence is QLNFGLSCLEQE. Residues 49–69 traverse the membrane as a helical segment; that stretch reads LLVGSLLLGALLASLVGGFLI. The Cytoplasmic segment spans residues 70–82; sequence DCYGRRRAILGSN. The chain crosses the membrane as a helical span at residues 83-103; the sequence is AVLLAGSLILGLASSLPWLLL. Residues 104 to 107 lie on the Extracellular side of the membrane; sequence GRLS. A helical transmembrane segment spans residues 108 to 128; it reads VGFAISLSSMACCIYVSELVG. Residues 129 to 132 are Cytoplasmic-facing; sequence PRQR. Residues 133 to 153 traverse the membrane as a helical segment; sequence GVLVSLYEVGITVGILFSYGL. Over 154 to 166 the chain is Extracellular; it reads NYVLAGSPWGWRH. A helical membrane pass occupies residues 167–187; sequence MFGWAAAPALLQSLSLFLLPA. Topologically, residues 188-232 are cytoplasmic; the sequence is GAEGTAAPKDLIPLQGRETSKPGLVKPQYSFLDLFRAQDGMWSRT. The helical transmembrane segment at 233–253 threads the bilayer; it reads VVGLGLVLFQQLTGQPNVLYY. A D-glucose-binding site is contributed by 242–243; that stretch reads QQ. Residues 254 to 269 lie on the Extracellular side of the membrane; sequence ASTIFRSVGFHGGSSA. A helical transmembrane segment spans residues 270 to 290; that stretch reads VLASVGLGTVKVAATLVATGL. The Cytoplasmic segment spans residues 291–298; the sequence is VDRAGRRV. The helical transmembrane segment at 299 to 319 threads the bilayer; sequence LLLFGCALMALSVSGIGLVSF. Residues 320 to 402 are Extracellular-facing; the sequence is AVSLDSGPSC…VPTSPILEHT (83 aa). Residues 403–423 traverse the membrane as a helical segment; it reads LLCWSALVCMMVYVSAFSVGF. Residues 424–442 lie on the Cytoplasmic side of the membrane; sequence GPVTWLVLSEIYPAEIRGR. Tryptophan 428 provides a ligand contact to D-glucose. A helical transmembrane segment spans residues 443–463; that stretch reads AFAFCSSFNWAANLFISLSFL. At 464-468 the chain is on the extracellular side; the sequence is DLIGA. Residues 469–489 traverse the membrane as a helical segment; it reads IGLAWTFLLYGLTAVLGLAFI. At 490–536 the chain is on the cytoplasmic side; it reads YLLVPETKGQSLAEIEQQFQTSRFPLNFGHRQRIGIQYHRLDVSSAS.

The protein belongs to the major facilitator superfamily. Sugar transporter (TC 2.A.1.1) family. Glucose transporter subfamily.

The protein resides in the endomembrane system. It is found in the cytoplasm. It localises to the perinuclear region. It catalyses the reaction D-glucose(out) = D-glucose(in). Functionally, facilitative glucose transporter required for the development of the cardiovascular system. This chain is Solute carrier family 2, facilitated glucose transporter member 10, found in Mus musculus (Mouse).